Here is a 207-residue protein sequence, read N- to C-terminus: MTSVALFKQDGTQNGDVTLNDAVFGVEPNENVVFDAILMQRASMRQGTHAVKNRSARRGGGRKPWRQKGTGRARQGSIRSPQWRKGGIVFGPTPRSYSYKLPKKVMRLALKSVLSQKVLDNSLVAVDSLAFDAPKTKDFVNVLNNLNVDTKTLVLVEEDNEKAALAGRNLPNVKILKAKGVNVLDVANSDKLVVTQKALDQLEEALA.

A disordered region spans residues 45–78 (RQGTHAVKNRSARRGGGRKPWRQKGTGRARQGSI). Positions 51–71 (VKNRSARRGGGRKPWRQKGTG) are enriched in basic residues.

Belongs to the universal ribosomal protein uL4 family. In terms of assembly, part of the 50S ribosomal subunit.

One of the primary rRNA binding proteins, this protein initially binds near the 5'-end of the 23S rRNA. It is important during the early stages of 50S assembly. It makes multiple contacts with different domains of the 23S rRNA in the assembled 50S subunit and ribosome. In terms of biological role, forms part of the polypeptide exit tunnel. This is Large ribosomal subunit protein uL4 from Lactiplantibacillus plantarum (strain ATCC BAA-793 / NCIMB 8826 / WCFS1) (Lactobacillus plantarum).